We begin with the raw amino-acid sequence, 362 residues long: Molybdenum import ATP-binding protein ModC (362 aa).

Residues 4–238 form the ABC transporter domain; that stretch reads AGEAAIRARF…LDLPIRLGED (235 aa). 38 to 45 contributes to the ATP binding site; the sequence is GHSGSGKT. The 66-residue stretch at 297 to 362 folds into the Mop domain; sequence GTSILNTLPA…AQIKAVALVG (66 aa).

This sequence belongs to the ABC transporter superfamily. Molybdate importer (TC 3.A.1.8) family. The complex is composed of two ATP-binding proteins (ModC), two transmembrane proteins (ModB) and a solute-binding protein (ModA).

The protein localises to the cell inner membrane. It catalyses the reaction molybdate(out) + ATP + H2O = molybdate(in) + ADP + phosphate + H(+). Part of the ABC transporter complex ModABC involved in molybdenum import. Responsible for energy coupling to the transport system. In Thiobacillus denitrificans (strain ATCC 25259 / T1), this protein is Molybdenum import ATP-binding protein ModC.